We begin with the raw amino-acid sequence, 197 residues long: Probable chorismate pyruvate-lyase (197 aa).

Over residues 1–14 (MRFDAADAHWRETP) the composition is skewed to basic and acidic residues. Residues 1-25 (MRFDAADAHWRETPRPGASGAQKDW) are disordered. Arg73, Leu111, and Glu173 together coordinate substrate.

Belongs to the UbiC family.

It is found in the cytoplasm. It carries out the reaction chorismate = 4-hydroxybenzoate + pyruvate. The protein operates within cofactor biosynthesis; ubiquinone biosynthesis. Its function is as follows. Removes the pyruvyl group from chorismate, with concomitant aromatization of the ring, to provide 4-hydroxybenzoate (4HB) for the ubiquinone pathway. The protein is Probable chorismate pyruvate-lyase of Burkholderia thailandensis (strain ATCC 700388 / DSM 13276 / CCUG 48851 / CIP 106301 / E264).